Consider the following 555-residue polypeptide: Putative protein NRT1/ PTR FAMILY 2.14 (555 aa).

Helical transmembrane passes span 62-82 (VTLI…GAFI), 93-113 (IVFG…TSLV), 135-155 (YSQL…TGGI), 181-201 (FFSW…TLVL), 209-229 (WGIG…LLFV), 234-254 (YVFV…LVAA), 319-339 (IKSI…FLAM), 363-383 (LIPP…WLPF), 405-425 (LQKV…SGIV), 441-461 (VFWL…TIVG), 480-500 (SLLY…VSIV), and 523-543 (CFYY…FWCA).

It belongs to the major facilitator superfamily. Proton-dependent oligopeptide transporter (POT/PTR) (TC 2.A.17) family. Not detected.

Its subcellular location is the membrane. This Arabidopsis thaliana (Mouse-ear cress) protein is Putative protein NRT1/ PTR FAMILY 2.14 (NPF2.14).